Here is a 167-residue protein sequence, read N- to C-terminus: Type IV major pilin protein PilE (167 aa).

A propeptide spans 1–7 (MNTLQKG) (leader sequence). F8 is subject to N-methylphenylalanine. A helical membrane pass occupies residues 8 to 28 (FTLIELMIVIAIVGILAAVAL). The O-linked (GlcNAc...) serine glycan is linked to S70. C127 and C160 form a disulfide bridge.

This sequence belongs to the N-Me-Phe pilin family. The pili are polar flexible filaments of about 5.4 nanometers diameter and 2.5 micrometers average length; they consist of only a single polypeptide chain arranged in a helical configuration of five subunits per turn in the assembled pilus.

The protein resides in the fimbrium. The protein localises to the membrane. Its function is as follows. Major component of the type IV pilus (T4P) that plays a role in cellular adherence, microcolony formation, resistance to neutrophil mediated killing, twitching motility as well as transformation. Mediates the attachment and the formation of bacterial microcolonies on host epithelial cells. Mechanistically, pili retractation induces host NF-kappa-B activation in infected cells, which is temporally associated with the formation of gonococcal microcolonies. This Neisseria gonorrhoeae protein is Type IV major pilin protein PilE (pilE).